Here is a 468-residue protein sequence, read N- to C-terminus: Glutamate--tRNA ligase (468 aa).

A 'HIGH' region motif is present at residues Pro-9 to Asn-19. Positions Lys-239–Arg-243 match the 'KMSKS' region motif. Residue Lys-242 coordinates ATP.

The protein belongs to the class-I aminoacyl-tRNA synthetase family. Glutamate--tRNA ligase type 1 subfamily. Monomer.

It is found in the cytoplasm. It carries out the reaction tRNA(Glu) + L-glutamate + ATP = L-glutamyl-tRNA(Glu) + AMP + diphosphate. Its function is as follows. Catalyzes the attachment of glutamate to tRNA(Glu) in a two-step reaction: glutamate is first activated by ATP to form Glu-AMP and then transferred to the acceptor end of tRNA(Glu). The protein is Glutamate--tRNA ligase of Blochmanniella pennsylvanica (strain BPEN).